The sequence spans 353 residues: Anthranilate phosphoribosyltransferase (353 aa).

5-phospho-alpha-D-ribose 1-diphosphate contacts are provided by residues glycine 86, 89–90 (GD), 96–99 (NVST), 114–122 (KHGNRAVSG), and serine 126. Residue glycine 86 coordinates anthranilate. Residue serine 98 participates in Mg(2+) binding. An anthranilate-binding site is contributed by asparagine 117. Arginine 172 contacts anthranilate. Positions 231 and 232 each coordinate Mg(2+).

This sequence belongs to the anthranilate phosphoribosyltransferase family. As to quaternary structure, homodimer. Mg(2+) serves as cofactor.

It carries out the reaction N-(5-phospho-beta-D-ribosyl)anthranilate + diphosphate = 5-phospho-alpha-D-ribose 1-diphosphate + anthranilate. Its pathway is amino-acid biosynthesis; L-tryptophan biosynthesis; L-tryptophan from chorismate: step 2/5. Catalyzes the transfer of the phosphoribosyl group of 5-phosphorylribose-1-pyrophosphate (PRPP) to anthranilate to yield N-(5'-phosphoribosyl)-anthranilate (PRA). In Pseudomonas syringae pv. syringae (strain B728a), this protein is Anthranilate phosphoribosyltransferase.